The chain runs to 468 residues: 3-isopropylmalate dehydratase large subunit (468 aa).

Residues Cys-348, Cys-409, and Cys-412 each coordinate [4Fe-4S] cluster.

The protein belongs to the aconitase/IPM isomerase family. LeuC type 1 subfamily. Heterodimer of LeuC and LeuD. The cofactor is [4Fe-4S] cluster.

The catalysed reaction is (2R,3S)-3-isopropylmalate = (2S)-2-isopropylmalate. It participates in amino-acid biosynthesis; L-leucine biosynthesis; L-leucine from 3-methyl-2-oxobutanoate: step 2/4. In terms of biological role, catalyzes the isomerization between 2-isopropylmalate and 3-isopropylmalate, via the formation of 2-isopropylmaleate. The protein is 3-isopropylmalate dehydratase large subunit of Dechloromonas aromatica (strain RCB).